Here is a 131-residue protein sequence, read N- to C-terminus: Small ribosomal subunit protein uS8 (131 aa).

This sequence belongs to the universal ribosomal protein uS8 family. In terms of assembly, part of the 30S ribosomal subunit. Contacts proteins S5 and S12.

One of the primary rRNA binding proteins, it binds directly to 16S rRNA central domain where it helps coordinate assembly of the platform of the 30S subunit. This is Small ribosomal subunit protein uS8 from Hydrogenovibrio crunogenus (strain DSM 25203 / XCL-2) (Thiomicrospira crunogena).